The sequence spans 141 residues: Large ribosomal subunit protein uL11 (141 aa).

Belongs to the universal ribosomal protein uL11 family. In terms of assembly, part of the ribosomal stalk of the 50S ribosomal subunit. Interacts with L10 and the large rRNA to form the base of the stalk. L10 forms an elongated spine to which L12 dimers bind in a sequential fashion forming a multimeric L10(L12)X complex. One or more lysine residues are methylated.

In terms of biological role, forms part of the ribosomal stalk which helps the ribosome interact with GTP-bound translation factors. The chain is Large ribosomal subunit protein uL11 from Brevibacillus brevis (strain 47 / JCM 6285 / NBRC 100599).